Consider the following 37-residue polypeptide: Photosystem I reaction center subunit VIII (37 aa).

The helical transmembrane segment at 7–27 (LPSIFVPLVGLVFPAIAMASL) threads the bilayer.

Belongs to the PsaI family.

It is found in the plastid. Its subcellular location is the chloroplast thylakoid membrane. Its function is as follows. May help in the organization of the PsaL subunit. In Populus alba (White poplar), this protein is Photosystem I reaction center subunit VIII.